The following is a 197-amino-acid chain: MKTAVIASLIAGAAAFAPAKNAARTSVATNMAFEDELGAQPPLGFFDPLGLVADGDQEKFDRLRYVEIKHGRISMLAVVGYLVQEAGVRLPGTIDYSGKTFAEIPKFAAFKEIPAGGLVQLLFFIGVLESSVMRDLTGEAEFVGDFRNGAIDFGWDTFDEETQFKKRAIELNQGRAAQMGILAFMVHEQLGVSLLPQ.

A chloroplast-targeting transit peptide spans 1-31; it reads MKTAVIASLIAGAAAFAPAKNAARTSVATNM. Transmembrane regions (helical) follow at residues 73-94, 113-133, and 174-196; these read ISML…PGTI, IPAG…SSVM, and GRAA…SLLP.

Belongs to the fucoxanthin chlorophyll protein family. In terms of assembly, the LHC complex of chromophytic algae is composed of fucoxanthin, chlorophyll A and C bound non-covalently by fucoxanthin chlorophyll proteins (FCPs). The ratio of the pigments in LHC; fucoxanthin: chlorophyll C: chlorophyll A; (0.6-1): (0.1-0.3): (1).

It localises to the plastid. The protein resides in the chloroplast thylakoid membrane. In terms of biological role, the light-harvesting complex (LHC) functions as a light receptor, it captures and delivers excitation energy to photosystems with which it is closely associated. Energy is transferred from the carotenoid and chlorophyll C (or B) to chlorophyll A and the photosynthetic reaction centers where it is used to synthesize ATP and reducing power. The polypeptide is Fucoxanthin-chlorophyll a-c binding protein C, chloroplastic (FCPC) (Phaeodactylum tricornutum (Diatom)).